The following is a 236-amino-acid chain: Leucyl/phenylalanyl-tRNA--protein transferase (236 aa).

This sequence belongs to the L/F-transferase family.

Its subcellular location is the cytoplasm. The enzyme catalyses N-terminal L-lysyl-[protein] + L-leucyl-tRNA(Leu) = N-terminal L-leucyl-L-lysyl-[protein] + tRNA(Leu) + H(+). It catalyses the reaction N-terminal L-arginyl-[protein] + L-leucyl-tRNA(Leu) = N-terminal L-leucyl-L-arginyl-[protein] + tRNA(Leu) + H(+). The catalysed reaction is L-phenylalanyl-tRNA(Phe) + an N-terminal L-alpha-aminoacyl-[protein] = an N-terminal L-phenylalanyl-L-alpha-aminoacyl-[protein] + tRNA(Phe). Its function is as follows. Functions in the N-end rule pathway of protein degradation where it conjugates Leu, Phe and, less efficiently, Met from aminoacyl-tRNAs to the N-termini of proteins containing an N-terminal arginine or lysine. This chain is Leucyl/phenylalanyl-tRNA--protein transferase, found in Shewanella sp. (strain ANA-3).